Consider the following 367-residue polypeptide: Spermidine/putrescine import ATP-binding protein PotA (367 aa).

Residues Ile10 to Ile240 form the ABC transporter domain. Position 42-49 (Gly42–Ser49) interacts with ATP.

The protein belongs to the ABC transporter superfamily. Spermidine/putrescine importer (TC 3.A.1.11.1) family. In terms of assembly, the complex is composed of two ATP-binding proteins (PotA), two transmembrane proteins (PotB and PotC) and a solute-binding protein (PotD).

Its subcellular location is the cell membrane. It catalyses the reaction ATP + H2O + polyamine-[polyamine-binding protein]Side 1 = ADP + phosphate + polyamineSide 2 + [polyamine-binding protein]Side 1.. In terms of biological role, part of the ABC transporter complex PotABCD involved in spermidine/putrescine import. Responsible for energy coupling to the transport system. This Oenococcus oeni (strain ATCC BAA-331 / PSU-1) protein is Spermidine/putrescine import ATP-binding protein PotA.